Reading from the N-terminus, the 542-residue chain is L-ornithine N(5)-monooxygenase (542 aa).

Residues 45–53 (EKHEVFRWH) and glutamine 64 contribute to the FAD site. A substrate-binding site is contributed by lysine 69. 218–221 (SGQS) is an NADP(+) binding site. Residues 263 to 266 (NEIF) and asparagine 294 contribute to the substrate site. 294–296 (NYS) lines the NADP(+) pocket. The segment at 443-472 (FFHDSSPSTASSSTVSTPPTSPETSRFSSP) is disordered. Residues 447–472 (SSPSTASSSTVSTPPTSPETSRFSSP) show a composition bias toward low complexity. An FAD-binding site is contributed by 518-520 (TLL). Serine 521 is a substrate binding site.

This sequence belongs to the lysine N(6)-hydroxylase/L-ornithine N(5)-oxygenase family. In terms of assembly, homotetramer. The cofactor is FAD.

The enzyme catalyses L-ornithine + NADPH + O2 = N(5)-hydroxy-L-ornithine + NADP(+) + H2O. The catalysed reaction is L-ornithine + NADH + O2 = N(5)-hydroxy-L-ornithine + NAD(+) + H2O. It functions in the pathway siderophore biosynthesis. In terms of biological role, L-ornithine N(5)-monooxygenase; part of the gene cluster that mediates the biosynthesis of coprinoferrin, an acylated tripeptide hydroxamate siderophore. The biosynthesis of coprinoferrin depends on the hydroxylation of ornithine to N(5)-hydroxyornithine, catalyzed by the monooxygenase cpf2. The second step, the acylation of N(5)-hydroxy-L-ornithine to yield N(5)-hexanoyl-N(5)-hydroxyl-L-ornithine is catalyzed by a not yet identified acyltransferase. Finally, assembly of coprinoferrin is catalyzed by the nonribosomal peptide synthase (NRPS) cpf1 via amide bond formation between three N(5)-hexanoyl-N(5)-hydroxyl-L-ornithine molecules to release the linear trimer. Interestingly, proteins seemingly not directly related to biosynthesis, such as transcription factors, replication factors, and autophagy-related proteins, are conserved among the clusters homologous to the coprinoferrin cluster, suggesting that the cluster may also play developmental and cell biological functions. The polypeptide is L-ornithine N(5)-monooxygenase (Coprinopsis cinerea (strain Okayama-7 / 130 / ATCC MYA-4618 / FGSC 9003) (Inky cap fungus)).